The following is a 460-amino-acid chain: GTPase Der (460 aa).

EngA-type G domains are found at residues 2-166 and 175-353; these read KTIA…AEER and TRIA…QERK. GTP-binding positions include 8-15, 55-59, 118-121, 181-188, 228-232, and 293-296; these read GRPNVGKS, DTGGL, NKLD, GQPNAGKS, DTAGL, and NKID. A KH-like domain is found at 354–446; sequence KRIPTHRLTQ…LLWKWRKAEG (93 aa).

It belongs to the TRAFAC class TrmE-Era-EngA-EngB-Septin-like GTPase superfamily. EngA (Der) GTPase family. In terms of assembly, associates with the 50S ribosomal subunit.

Its function is as follows. GTPase that plays an essential role in the late steps of ribosome biogenesis. This Methylacidiphilum infernorum (isolate V4) (Methylokorus infernorum (strain V4)) protein is GTPase Der.